We begin with the raw amino-acid sequence, 345 residues long: Microtubule-associated protein Jupiter (345 aa).

The segment covering 1–14 has biased composition (polar residues); the sequence is MISNFDCTDNQASS. A disordered region spans residues 1-34; sequence MISNFDCTDNQASSKVLRPPGGGSSDIFGSEMPQ. Position 24 is a phosphoserine (Ser24). Thr35 is modified (phosphothreonine). Over residues 78–87 the composition is skewed to basic and acidic residues; the sequence is QKTVDSHNRL. The interval 78–100 is disordered; sequence QKTVDSHNRLFGEPTRPITPGKN. A phosphothreonine mark is found at Thr92 and Thr96. Phosphoserine is present on residues Ser105, Ser134, and Ser145. Disordered regions lie at residues 127-241 and 300-345; these read HYNG…QPHS and EGNP…SGLW. Residues 132 to 145 are compositionally biased toward low complexity; sequence SGSVSSASSSVSSS. Over residues 146–164 the composition is skewed to polar residues; that stretch reads TENLKMNSGSRSVFRNMST. Pro residues predominate over residues 177-191; that stretch reads LCPPSPVRIEPPTPP. Polar residues-rich tracts occupy residues 212–226 and 315–326; these read DNST…NEAC and DYNQRQESSNAG.

It belongs to the MAP Jupiter family.

It is found in the nucleus. The protein localises to the cytoplasm. Its subcellular location is the cytoskeleton. It localises to the spindle. Its function is as follows. Binds to all microtubule populations. The protein is Microtubule-associated protein Jupiter of Drosophila erecta (Fruit fly).